The sequence spans 600 residues: Elongation factor 4 (600 aa).

Residues 5 to 187 (SNIRNFSIIA…ALVERIPAPT (183 aa)) form the tr-type G domain. GTP contacts are provided by residues 17 to 22 (DHGKST) and 134 to 137 (NKID).

The protein belongs to the TRAFAC class translation factor GTPase superfamily. Classic translation factor GTPase family. LepA subfamily.

It is found in the cell inner membrane. It carries out the reaction GTP + H2O = GDP + phosphate + H(+). Functionally, required for accurate and efficient protein synthesis under certain stress conditions. May act as a fidelity factor of the translation reaction, by catalyzing a one-codon backward translocation of tRNAs on improperly translocated ribosomes. Back-translocation proceeds from a post-translocation (POST) complex to a pre-translocation (PRE) complex, thus giving elongation factor G a second chance to translocate the tRNAs correctly. Binds to ribosomes in a GTP-dependent manner. In Psychrobacter sp. (strain PRwf-1), this protein is Elongation factor 4.